We begin with the raw amino-acid sequence, 445 residues long: Cyclin-B1-2 (445 aa).

This sequence belongs to the cyclin family. Cyclin AB subfamily. In terms of assembly, interacts with FZR2/CCS52A1, FZR1/CCS52A2 and FZR3/CCS52B. In terms of tissue distribution, expressed in roots, stems and flowers.

May induce mitotic cell division. The chain is Cyclin-B1-2 (CYCB1-2) from Arabidopsis thaliana (Mouse-ear cress).